The primary structure comprises 295 residues: Ent-pimara-9(11),15-diene synthase (295 aa).

Belongs to the terpene synthase family. As to quaternary structure, monomer. The cofactor is a divalent metal cation.

It carries out the reaction ent-copalyl diphosphate = ent-pimara-9(11),15-diene + diphosphate. Its pathway is antibiotic biosynthesis. Its function is as follows. Involved in viguiepinol biosynthesis. Catalyzes the conversion of copalyl diphosphate (ent-CDP) into pimara-9(11),15-diene (PMD). This chain is Ent-pimara-9(11),15-diene synthase, found in Streptomyces sp. (strain KO-3988).